The primary structure comprises 414 residues: Serine/threonine transporter SstT (414 aa).

A run of 8 helical transmembrane segments spans residues 22 to 42 (GLVLGIVVALISAPLQETIGF), 54 to 74 (IFVKALRAVAPILIFFLVMAA), 89 to 109 (IIVLYLLGTFLAAFVAVIAGF), 148 to 168 (AIFKANFIGVLAWSIGLGLAL), 189 to 209 (IVHVIISFAPFGVFGLVAETL), 223 to 243 (LLAVLIGTMLFTAFVVNPILV), 305 to 325 (MAGAAITITILTLAAVHTLGL), and 337 to 357 (IVAALCACGASGVAGGSLLLI).

Belongs to the dicarboxylate/amino acid:cation symporter (DAACS) (TC 2.A.23) family.

It localises to the cell inner membrane. It catalyses the reaction L-serine(in) + Na(+)(in) = L-serine(out) + Na(+)(out). The catalysed reaction is L-threonine(in) + Na(+)(in) = L-threonine(out) + Na(+)(out). Functionally, involved in the import of serine and threonine into the cell, with the concomitant import of sodium (symport system). The polypeptide is Serine/threonine transporter SstT (Haemophilus influenzae (strain 86-028NP)).